The sequence spans 392 residues: Bone morphogenetic protein 15 (392 aa).

Residues 1–25 form the signal peptide; it reads MALLTILRILLWGVVLFMEQRVQMA. The propeptide occupies 26-267; it reads KPGWPSTALL…ESSFLMRSVR (242 aa). N-linked (GlcNAc...) asparagine glycans are attached at residues Asn85, Asn213, Asn236, Asn349, and Asn373. 3 disulfides stabilise this stretch: Cys291-Cys357, Cys320-Cys389, and Cys324-Cys391.

The protein belongs to the TGF-beta family. In terms of assembly, homodimer. But, in contrast to other members of this family, cannot be disulfide-linked. Ovary specific.

It is found in the secreted. Functionally, may be involved in follicular development. Oocyte-specific growth/differentiation factor that stimulates folliculogenesis and granulosa cell (GC) growth. In Mus musculus (Mouse), this protein is Bone morphogenetic protein 15 (Bmp15).